A 99-amino-acid polypeptide reads, in one-letter code: Small ribosomal subunit protein bS20 (99 aa).

This sequence belongs to the bacterial ribosomal protein bS20 family.

Binds directly to 16S ribosomal RNA. This is Small ribosomal subunit protein bS20 from Caldicellulosiruptor bescii (strain ATCC BAA-1888 / DSM 6725 / KCTC 15123 / Z-1320) (Anaerocellum thermophilum).